Reading from the N-terminus, the 123-residue chain is UPF0738 protein Bcer98_0913 (123 aa).

This sequence belongs to the UPF0738 family.

The protein is UPF0738 protein Bcer98_0913 of Bacillus cytotoxicus (strain DSM 22905 / CIP 110041 / 391-98 / NVH 391-98).